The primary structure comprises 407 residues: uncharacterized protein (407 aa).

Residues 10-37 (DKLEQLANDVVTELTDMENKYKDLHVEL) are a coiled coil.

This is an uncharacterized protein from Bacillus subtilis (strain 168).